The sequence spans 715 residues: Fatty acid oxidation complex subunit alpha (715 aa).

The segment at 1-190 (MIYEGKAITV…KVSAVDAVVT (190 aa)) is enoyl-CoA hydratase/isomerase. Asp-297 is a substrate binding site. The interval 312–715 (KDVKQAAVLG…MAKNGQSFFG (404 aa)) is 3-hydroxyacyl-CoA dehydrogenase. Residues Met-325, Asp-344, 401–403 (VVE), Lys-408, and Ser-430 each bind NAD(+). Residue His-451 is the For 3-hydroxyacyl-CoA dehydrogenase activity of the active site. An NAD(+)-binding site is contributed by Asn-454. Asn-501 and Tyr-660 together coordinate substrate.

It in the N-terminal section; belongs to the enoyl-CoA hydratase/isomerase family. The protein in the C-terminal section; belongs to the 3-hydroxyacyl-CoA dehydrogenase family. In terms of assembly, heterotetramer of two alpha chains (FadB) and two beta chains (FadA).

It catalyses the reaction a (3S)-3-hydroxyacyl-CoA + NAD(+) = a 3-oxoacyl-CoA + NADH + H(+). The catalysed reaction is a (3S)-3-hydroxyacyl-CoA = a (2E)-enoyl-CoA + H2O. The enzyme catalyses a 4-saturated-(3S)-3-hydroxyacyl-CoA = a (3E)-enoyl-CoA + H2O. It carries out the reaction (3S)-3-hydroxybutanoyl-CoA = (3R)-3-hydroxybutanoyl-CoA. It catalyses the reaction a (3Z)-enoyl-CoA = a 4-saturated (2E)-enoyl-CoA. The catalysed reaction is a (3E)-enoyl-CoA = a 4-saturated (2E)-enoyl-CoA. It participates in lipid metabolism; fatty acid beta-oxidation. Involved in the aerobic and anaerobic degradation of long-chain fatty acids via beta-oxidation cycle. Catalyzes the formation of 3-oxoacyl-CoA from enoyl-CoA via L-3-hydroxyacyl-CoA. It can also use D-3-hydroxyacyl-CoA and cis-3-enoyl-CoA as substrate. The chain is Fatty acid oxidation complex subunit alpha from Pseudomonas fragi.